The primary structure comprises 202 residues: Probable cytochrome c oxidase subunit 3 (202 aa).

The next 5 helical transmembrane spans lie at 30–50, 69–89, 101–121, 141–161, and 178–198; these read VVWL…YFTA, AVPV…GVFS, WYVI…YEYY, LATG…IFLL, and IVVS…FTVI.

This sequence belongs to the cytochrome c oxidase subunit 3 family.

The protein resides in the cell membrane. The catalysed reaction is 4 Fe(II)-[cytochrome c] + O2 + 8 H(+)(in) = 4 Fe(III)-[cytochrome c] + 2 H2O + 4 H(+)(out). The protein is Probable cytochrome c oxidase subunit 3 (ctaE) of Mycobacterium leprae (strain TN).